A 620-amino-acid polypeptide reads, in one-letter code: MEVFMAKNVKTKSKNKNKKIVDNRTNIDIKSQFKKVETGIKNGVFVFTNNLTIDEFSKKINKHSAEIIKYLFLKGINCNLNTLLDERQMGELCLEFGYDFKKEIQINEDNFLDNIKFEDREDLLDKRPPIVTIMGHVDHGKTTLLDTIRKSKVAATEAGNITQSIGAYQVEWKKHLITFFDTPGHEAFSKMRAVGADLTDIVVLVVAADDGLKPQTEEAIDHALFAKAPIIVFINKMDKKDANIEKIYSQLAEKNVLCEEWGGKTMVIKGSALNNQGIDELLEAIIVTAEIMELKANPKRLANGITIEASMDKGEGAVADLLVQSGTLAVNDYILVGEYYGKVKKMVDFNRKEIKTALPSTPVRISGLNGIPKSGDKWIVTNDEKLLKELSEKRQLNTKQRKLSNFGTNLNENSQGIKELNVILKTDNNGSLEAIKGLLSSIEVTGAKLNLVRAAIGSINESDIDLARTSKSLVVIFNTKVSSKVSDYAISMGITIKNYNIIYQIKDEIERLLKGILDPVFVEKEIGSVEIRQLWSHSSIGVIAGGRVLTGEIKRNAFARIKRKDKEIISNAKINSLRHGKDSIASAAAGKECGFTLENFNDFVEGDIVEIYEIVGETHE.

The tr-type G domain occupies 126 to 295; that stretch reads KRPPIVTIMG…IVTAEIMELK (170 aa). Residues 135 to 142 form a G1 region; it reads GHVDHGKT. Residue 135-142 participates in GTP binding; it reads GHVDHGKT. The G2 stretch occupies residues 160-164; it reads NITQS. The segment at 181–184 is G3; the sequence is DTPG. GTP contacts are provided by residues 181 to 185 and 235 to 238; these read DTPGH and NKMD. Positions 235–238 are G4; sequence NKMD. Positions 271–273 are G5; the sequence is SAL.

Belongs to the TRAFAC class translation factor GTPase superfamily. Classic translation factor GTPase family. IF-2 subfamily.

The protein localises to the cytoplasm. In terms of biological role, one of the essential components for the initiation of protein synthesis. Protects formylmethionyl-tRNA from spontaneous hydrolysis and promotes its binding to the 30S ribosomal subunits. Also involved in the hydrolysis of GTP during the formation of the 70S ribosomal complex. The chain is Translation initiation factor IF-2 from Malacoplasma penetrans (strain HF-2) (Mycoplasma penetrans).